A 556-amino-acid chain; its full sequence is 2-succinyl-5-enolpyruvyl-6-hydroxy-3-cyclohexene-1-carboxylate synthase (556 aa).

Belongs to the TPP enzyme family. MenD subfamily. Homodimer. Mg(2+) is required as a cofactor. It depends on Mn(2+) as a cofactor. Thiamine diphosphate serves as cofactor.

The catalysed reaction is isochorismate + 2-oxoglutarate + H(+) = 5-enolpyruvoyl-6-hydroxy-2-succinyl-cyclohex-3-ene-1-carboxylate + CO2. It functions in the pathway quinol/quinone metabolism; 1,4-dihydroxy-2-naphthoate biosynthesis; 1,4-dihydroxy-2-naphthoate from chorismate: step 2/7. Its pathway is quinol/quinone metabolism; menaquinone biosynthesis. Functionally, catalyzes the thiamine diphosphate-dependent decarboxylation of 2-oxoglutarate and the subsequent addition of the resulting succinic semialdehyde-thiamine pyrophosphate anion to isochorismate to yield 2-succinyl-5-enolpyruvyl-6-hydroxy-3-cyclohexene-1-carboxylate (SEPHCHC). The protein is 2-succinyl-5-enolpyruvyl-6-hydroxy-3-cyclohexene-1-carboxylate synthase of Escherichia coli O8 (strain IAI1).